We begin with the raw amino-acid sequence, 92 residues long: Alpha-conotoxin-like Rt20.1 (92 aa).

Positions Met1–Gly24 are cleaved as a signal peptide. Residues Gln25 to Arg45 constitute a propeptide that is removed on maturation. At Glu49 the chain carries 4-carboxyglutamate. Position 55 is a 4-hydroxyproline (Pro55). 4 disulfides stabilise this stretch: Cys63/Cys72, Cys68/Cys80, Cys73/Cys90, and Cys78/Cys92.

This sequence belongs to the conotoxin D superfamily. Hetero-, homo- or pseudo-homodimer (identical sequence, different post-translational modifications). As to expression, expressed by the venom duct.

Its subcellular location is the secreted. Functionally, alpha-conotoxins act on postsynaptic membranes, they bind to the nicotinic acetylcholine receptors (nAChR) and thus inhibit them. Through its two C-terminal domains, this homodimeric protein would bind to two nAChR allosteric sites, located outside the nAChR C-loop of the principal binding face and at the adjacent binding interface in a clockwise direction. This toxin specifically blocks mammalian neuronal nAChR of the alpha-7/CHRNA7, alpha-3-beta-2/CHRNA3-CHRNB2 and alpha-4-beta-2/CHRNA4-CHRNB2 subtypes. This Conus rattus (Rat cone) protein is Alpha-conotoxin-like Rt20.1.